Consider the following 299-residue polypeptide: Putative zinc-binding protein ORF12 (299 aa).

In Ictaluridae (bullhead catfishes), this protein is Putative zinc-binding protein ORF12 (ORF12).